Reading from the N-terminus, the 3471-residue chain is Genome polyprotein (3471 aa).

Residues 513–603 (EVQDALEKSM…RADIDALKKK (91 aa)) are a coiled coil. 2 disordered regions span residues 603 to 639 (KPAQ…EMSE) and 1271 to 1307 (NKTT…ARTS). Polar residues-rich tracts occupy residues 606–621 (QSVT…SGTA) and 1271–1291 (NKTT…TSTV). The next 2 membrane-spanning stretches (helical) occupy residues 1493-1513 (DKWI…LHYY) and 1592-1612 (MSSL…GKIP). The region spanning 1748 to 1914 (LELMNESYTY…PDVPKNEANP (167 aa)) is the SF3 helicase domain. 1774-1781 (GAPGVGKS) contributes to the ATP binding site. Residues 2360–2380 (ILLAIGASVAVAGVAVGAVIL) traverse the membrane as a helical segment. Over residues 2391–2401 (EDEEIEGEEGE) the composition is skewed to acidic residues. 2 disordered regions span residues 2391–2411 (EDEE…HESD) and 2435–2460 (VAEA…NFLG). Positions 2435 to 2448 (VAEAHEEKSTEKPR) are enriched in basic and acidic residues. A Peptidase C3 domain is found at 2629–2847 (GVDRDLSMTN…YAETLTQEHL (219 aa)). Residues H2677, E2714, and C2808 each act as for picornain 3C-like protease activity in the active site. A RdRp catalytic domain is found at 3152-3283 (TKGFAGDYSK…SVHEEFLDVY (132 aa)).

In terms of processing, specific enzymatic cleavages by picornain 3C-like protease in vivo yield mature proteins. Picornain 3C-like protease is autocatalytically processed.

It is found in the virion. The protein resides in the host membrane. The enzyme catalyses RNA(n) + a ribonucleoside 5'-triphosphate = RNA(n+1) + diphosphate. In terms of biological role, picornain 3C-like protease is a thiol protease that probably cleaves the polyprotein. The polypeptide is Genome polyprotein (Oryza sativa (Rice)).